Here is a 102-residue protein sequence, read N- to C-terminus: Integration host factor subunit beta (102 aa).

Residues 54 to 102 form a disordered region; sequence HHRPARMGRNPKTGEPVALPAKYVPHFKPGKELRERVNSSRHQAPLRSQ. Residues 82–91 are compositionally biased toward basic and acidic residues; sequence PGKELRERVN. Positions 93–102 are enriched in polar residues; sequence SRHQAPLRSQ.

Belongs to the bacterial histone-like protein family. In terms of assembly, heterodimer of an alpha and a beta chain.

This protein is one of the two subunits of integration host factor, a specific DNA-binding protein that functions in genetic recombination as well as in transcriptional and translational control. The protein is Integration host factor subunit beta of Halorhodospira halophila (strain DSM 244 / SL1) (Ectothiorhodospira halophila (strain DSM 244 / SL1)).